The following is a 314-amino-acid chain: Regulator of microtubule dynamics protein 1 (314 aa).

N6-succinyllysine is present on Lys165. TPR repeat units lie at residues 168–204 (AICLSDVGDYEGIKAKIANAYIIKEHFEKAIELNPKD) and 222–258 (PWYQRRIAKMLFATPPSSTYEKALSYFHRAEQVDPNF).

The protein belongs to the RMDN family. In terms of assembly, interacts with microtubules.

The protein localises to the cytoplasm. It is found in the cytoskeleton. The protein resides in the spindle. It localises to the spindle pole. In Pongo abelii (Sumatran orangutan), this protein is Regulator of microtubule dynamics protein 1 (RMDN1).